A 242-amino-acid polypeptide reads, in one-letter code: Small ribosomal subunit protein uS2 (242 aa).

Belongs to the universal ribosomal protein uS2 family.

In Neisseria meningitidis serogroup C (strain 053442), this protein is Small ribosomal subunit protein uS2.